Reading from the N-terminus, the 658-residue chain is Glycogen debranching enzyme (658 aa).

The active-site Nucleophile is Asp336. The active-site Proton donor is Glu371. Positions 459-484 (EANGEENRDGTNSNYSDNHGKEGLGG) are disordered.

It belongs to the glycosyl hydrolase 13 family.

The enzyme catalyses Hydrolysis of (1-&gt;6)-alpha-D-glucosidic linkages to branches with degrees of polymerization of three or four glucose residues in limit dextrin.. It participates in glycan degradation; glycogen degradation. In terms of biological role, removes maltotriose and maltotetraose chains that are attached by 1,6-alpha-linkage to the limit dextrin main chain, generating a debranched limit dextrin. This chain is Glycogen debranching enzyme, found in Salmonella choleraesuis (strain SC-B67).